The chain runs to 595 residues: Aspartate--tRNA(Asp/Asn) ligase (595 aa).

An L-aspartate-binding site is contributed by Glu175. The aspartate stretch occupies residues 199–202 (QQYK). 2 residues coordinate L-aspartate: Arg221 and His454. Position 221-223 (221-223 (RDE)) interacts with ATP. Glu488 is a binding site for ATP. Arg495 is a binding site for L-aspartate. 540-543 (GIDR) provides a ligand contact to ATP.

It belongs to the class-II aminoacyl-tRNA synthetase family. Type 1 subfamily. In terms of assembly, homodimer.

It localises to the cytoplasm. It catalyses the reaction tRNA(Asx) + L-aspartate + ATP = L-aspartyl-tRNA(Asx) + AMP + diphosphate. Its function is as follows. Aspartyl-tRNA synthetase with relaxed tRNA specificity since it is able to aspartylate not only its cognate tRNA(Asp) but also tRNA(Asn). Reaction proceeds in two steps: L-aspartate is first activated by ATP to form Asp-AMP and then transferred to the acceptor end of tRNA(Asp/Asn). The sequence is that of Aspartate--tRNA(Asp/Asn) ligase from Rhizobium meliloti (strain 1021) (Ensifer meliloti).